Consider the following 152-residue polypeptide: Vasotocin-neurophysin VT 1 (152 aa).

The N-terminal stretch at 1–19 (MSDSFLPTCILCLLALSSA) is a signal peptide. A disulfide bridge links Cys-20 with Cys-25. A Glycine amide modification is found at Gly-28. Intrachain disulfides connect Cys-40/Cys-84, Cys-43/Cys-57, Cys-51/Cys-74, Cys-58/Cys-64, Cys-91/Cys-103, Cys-97/Cys-115, and Cys-104/Cys-109.

This sequence belongs to the vasopressin/oxytocin family.

The protein localises to the secreted. Functionally, vasotocin is an antidiuretic hormone. In Catostomus commersonii (White sucker), this protein is Vasotocin-neurophysin VT 1.